The primary structure comprises 144 residues: MPRSPSKTSPRKGSPRRGSPSRKASPKRGGKGAKRAGKGGRRRNVVRRRRRRRESYGIYIYKVLKQVHPDTGISSRGMSVMNSFVNDIFGRIAGEASRLTRANRRSTISSREIQTAVRLLLPGELAKHAVSEGTKAVTKYTTSR.

The interval 1-51 (MPRSPSKTSPRKGSPRRGSPSRKASPKRGGKGAKRAGKGGRRRNVVRRRRR) is disordered. 5 consecutive short sequence motifs (SPKK motif) follow at residues 4–7 (SPSK), 9–12 (SPRK), 14–17 (SPRR), 19–22 (SPSR), and 25–28 (SPKR). Serine 14, serine 19, and serine 25 each carry phosphoserine. Positions 24-51 (ASPKRGGKGAKRAGKGGRRRNVVRRRRR) are enriched in basic residues. The O-linked (GlcNAc) serine glycan is linked to serine 131. Residue lysine 139 forms a Glycyl lysine isopeptide (Lys-Gly) (interchain with G-Cter in ubiquitin) linkage.

This sequence belongs to the histone H2B family. The nucleosome is a histone octamer containing two molecules each of H2A, H2B, H3 and H4 assembled in one H3-H4 heterotetramer and two H2A-H2B heterodimers. The octamer wraps approximately 147 bp of DNA. In terms of processing, monoubiquitination of Lys-139 gives a specific tag for epigenetic transcriptional activation and is also prerequisite for histone H3 'Lys-4' and 'Lys-79' methylation. Phosphorylated on SPKK motifs 3, 4 and 5; which may regulate DNA binding. Dephosphorylated during maturation of spermatids to mature sperm and rephosphorylated at fertilization. Post-translationally, glcNAcylation at Ser-131 promotes monoubiquitination of Lys-139. It fluctuates in response to extracellular glucose, and associates with transcribed genes.

Its subcellular location is the nucleus. The protein resides in the chromosome. In terms of biological role, core component of nucleosome. Nucleosomes wrap and compact DNA into chromatin, limiting DNA accessibility to the cellular machineries which require DNA as a template. Histones thereby play a central role in transcription regulation, DNA repair, DNA replication and chromosomal stability. DNA accessibility is regulated via a complex set of post-translational modifications of histones, also called histone code, and nucleosome remodeling. In Strongylocentrotus purpuratus (Purple sea urchin), this protein is Histone H2B.2, sperm.